A 93-amino-acid chain; its full sequence is Co-chaperonin GroES (93 aa).

This sequence belongs to the GroES chaperonin family. As to quaternary structure, heptamer of 7 subunits arranged in a ring. Interacts with the chaperonin GroEL.

The protein localises to the cytoplasm. Its function is as follows. Together with the chaperonin GroEL, plays an essential role in assisting protein folding. The GroEL-GroES system forms a nano-cage that allows encapsulation of the non-native substrate proteins and provides a physical environment optimized to promote and accelerate protein folding. GroES binds to the apical surface of the GroEL ring, thereby capping the opening of the GroEL channel. The chain is Co-chaperonin GroES from Streptococcus gordonii.